A 258-amino-acid chain; its full sequence is tRNA pseudouridine synthase A (258 aa).

The Nucleophile role is filled by D52. Position 110 (Y110) interacts with substrate.

This sequence belongs to the tRNA pseudouridine synthase TruA family. As to quaternary structure, homodimer.

The enzyme catalyses uridine(38/39/40) in tRNA = pseudouridine(38/39/40) in tRNA. Functionally, formation of pseudouridine at positions 38, 39 and 40 in the anticodon stem and loop of transfer RNAs. The protein is tRNA pseudouridine synthase A of Francisella tularensis subsp. holarctica (strain LVS).